Reading from the N-terminus, the 294-residue chain is Probable metallo-hydrolase BURPS1710b_2304 (294 aa).

The a divalent metal cation site is built by histidine 68, histidine 70, aspartate 72, histidine 73, histidine 143, aspartate 170, and histidine 212.

Belongs to the metallo-beta-lactamase superfamily. A divalent metal cation is required as a cofactor.

Functionally, probable hydrolase. Does not have beta-lactamase activity. The polypeptide is Probable metallo-hydrolase BURPS1710b_2304 (Burkholderia pseudomallei (strain 1710b)).